The sequence spans 301 residues: Probable alpha-L-glutamate ligase (301 aa).

One can recognise an ATP-grasp domain in the interval 104 to 287 (MQLLSRKGIG…VAGLIVDFIE (184 aa)). ATP is bound by residues Lys141, 178-179 (EF), Asp187, and 211-213 (RSN). Residues Asp248, Glu260, and Asn262 each coordinate Mg(2+). Mn(2+)-binding residues include Asp248, Glu260, and Asn262.

This sequence belongs to the RimK family. The cofactor is Mg(2+). Mn(2+) serves as cofactor.

This is Probable alpha-L-glutamate ligase from Aliivibrio salmonicida (strain LFI1238) (Vibrio salmonicida (strain LFI1238)).